A 186-amino-acid chain; its full sequence is Methylamine dehydrogenase light chain (186 aa).

Positions 1 to 57 form a signal peptide, tat-type signal; the sequence is MKKNTGFDSGIEKLARKTASKTGRRSFIGKLGGFLVGSALLPLLPVDRRGRMNEAHA. Disulfide bonds link Cys78/Cys143, Cys84/Cys116, Cys91/Cys176, Cys93/Cys141, Cys101/Cys132, and Cys133/Cys164. Tryptophylquinone is present on Trp112. A cross-link (tryptophan tryptophylquinone (Trp-Trp)) is located at residues 112–163; it reads WVASCFNPGDGQTYLIAYRDCCGKQTCGRCNCVNVQGELPVYRPEFNNDIVW.

It belongs to the aromatic amine dehydrogenase light chain family. As to quaternary structure, heterotetramer of two light and two heavy chains. It depends on tryptophan tryptophylquinone residue as a cofactor. In terms of processing, predicted to be exported by the Tat system. The position of the signal peptide cleavage has not been experimentally proven. Post-translationally, tryptophan tryptophylquinone (TTQ) is formed by oxidation of the indole ring of a tryptophan to form tryptophylquinone followed by covalent cross-linking with another tryptophan residue.

The protein resides in the periplasm. It carries out the reaction 2 oxidized [amicyanin] + methylamine + H2O = 2 reduced [amicyanin] + formaldehyde + NH4(+) + 2 H(+). Its pathway is one-carbon metabolism; methylamine degradation; formaldehyde from methylamine: step 1/1. In terms of biological role, methylamine dehydrogenase carries out the oxidation of methylamine. Electrons are passed from methylamine dehydrogenase to amicyanin. In Methylobacillus flagellatus (strain ATCC 51484 / DSM 6875 / VKM B-1610 / KT), this protein is Methylamine dehydrogenase light chain (mauA).